The sequence spans 921 residues: Protein translocase subunit SecA (921 aa).

ATP is bound by residues Q87, 105–109, and D515; that span reads GEGKT. The disordered stretch occupies residues 575-594; that stretch reads RRIDNQLRGRSGRQGDPGSS. Zn(2+)-binding residues include C905, C907, C916, and C917.

It belongs to the SecA family. Monomer and homodimer. Part of the essential Sec protein translocation apparatus which comprises SecA, SecYEG and auxiliary proteins SecDF-YajC and YidC. Requires Zn(2+) as cofactor.

The protein localises to the cell inner membrane. It is found in the cytoplasm. It carries out the reaction ATP + H2O + cellular proteinSide 1 = ADP + phosphate + cellular proteinSide 2.. Functionally, part of the Sec protein translocase complex. Interacts with the SecYEG preprotein conducting channel. Has a central role in coupling the hydrolysis of ATP to the transfer of proteins into and across the cell membrane, serving both as a receptor for the preprotein-SecB complex and as an ATP-driven molecular motor driving the stepwise translocation of polypeptide chains across the membrane. In Polynucleobacter necessarius subsp. necessarius (strain STIR1), this protein is Protein translocase subunit SecA.